The primary structure comprises 394 residues: Ornithine aminotransferase 1 (394 aa).

Position 252 is an N6-(pyridoxal phosphate)lysine (K252).

This sequence belongs to the class-III pyridoxal-phosphate-dependent aminotransferase family. OAT subfamily. Pyridoxal 5'-phosphate serves as cofactor.

Its subcellular location is the cytoplasm. The enzyme catalyses a 2-oxocarboxylate + L-ornithine = L-glutamate 5-semialdehyde + an L-alpha-amino acid. It functions in the pathway amino-acid biosynthesis; L-proline biosynthesis; L-glutamate 5-semialdehyde from L-ornithine: step 1/1. Functionally, catalyzes the interconversion of ornithine to glutamate semialdehyde. The chain is Ornithine aminotransferase 1 from Staphylococcus aureus (strain COL).